Here is a 461-residue protein sequence, read N- to C-terminus: Cysteine--tRNA ligase (461 aa).

Zn(2+) is bound at residue Cys-30. The short motif at 32–42 is the 'HIGH' region element; it reads VTIYDLCHIGH. Cys-211, His-236, and Glu-240 together coordinate Zn(2+). A 'KMSKS' region motif is present at residues 268–272; the sequence is KMSKS. Lys-271 is an ATP binding site.

The protein belongs to the class-I aminoacyl-tRNA synthetase family. In terms of assembly, monomer. Requires Zn(2+) as cofactor.

Its subcellular location is the cytoplasm. The catalysed reaction is tRNA(Cys) + L-cysteine + ATP = L-cysteinyl-tRNA(Cys) + AMP + diphosphate. This Shewanella putrefaciens (strain CN-32 / ATCC BAA-453) protein is Cysteine--tRNA ligase.